The chain runs to 418 residues: Serine hydroxymethyltransferase (418 aa).

Residues Leu-121 and 125 to 127 contribute to the (6S)-5,6,7,8-tetrahydrofolate site; that span reads GHL. Lys-230 carries the N6-(pyridoxal phosphate)lysine modification. 355-357 is a (6S)-5,6,7,8-tetrahydrofolate binding site; the sequence is SPF.

This sequence belongs to the SHMT family. In terms of assembly, homodimer. Pyridoxal 5'-phosphate serves as cofactor.

Its subcellular location is the cytoplasm. It catalyses the reaction (6R)-5,10-methylene-5,6,7,8-tetrahydrofolate + glycine + H2O = (6S)-5,6,7,8-tetrahydrofolate + L-serine. It functions in the pathway one-carbon metabolism; tetrahydrofolate interconversion. It participates in amino-acid biosynthesis; glycine biosynthesis; glycine from L-serine: step 1/1. Catalyzes the reversible interconversion of serine and glycine with tetrahydrofolate (THF) serving as the one-carbon carrier. This reaction serves as the major source of one-carbon groups required for the biosynthesis of purines, thymidylate, methionine, and other important biomolecules. Also exhibits THF-independent aldolase activity toward beta-hydroxyamino acids, producing glycine and aldehydes, via a retro-aldol mechanism. The protein is Serine hydroxymethyltransferase of Streptococcus pneumoniae (strain P1031).